A 65-amino-acid chain; its full sequence is Large ribosomal subunit protein bL35 (65 aa).

This sequence belongs to the bacterial ribosomal protein bL35 family.

This chain is Large ribosomal subunit protein bL35, found in Buchnera aphidicola subsp. Acyrthosiphon pisum (strain 5A).